The primary structure comprises 840 residues: Phosphatidylinositol-glycan-specific phospholipase D (840 aa).

A signal peptide spans 1-23; it reads MSAFRLWPGLLIMLGSLCHRGSP. N-linked (GlcNAc...) asparagine glycosylation is found at N94, N271, N292, N307, and N321. 7 FG-GAP repeats span residues 367–428, 436–497, 499–559, 563–623, 633–693, 704–770, and 788–840; these read SPLA…GLPP, EAHR…GGMS, SPNI…LSDK, NVEA…SLGR, QSWF…GATR, LLLS…TLGD, and QYVL…LGSD. N501, N568, N591, N604, and N659 each carry an N-linked (GlcNAc...) asparagine glycan.

Belongs to the GPLD1 family. Monomer.

It localises to the secreted. It catalyses the reaction a 6-(alpha-D-glucosaminyl)-1-(1,2-diacyl-sn-glycero-3-phospho)-1D-myo-inositol + H2O = 6-(alpha-D-glucosaminyl)-1D-myo-inositol + a 1,2-diacyl-sn-glycero-3-phosphate + H(+). Its function is as follows. This protein hydrolyzes the inositol phosphate linkage in proteins anchored by phosphatidylinositol glycans (GPI-anchor) thus releasing these proteins from the membrane. This chain is Phosphatidylinositol-glycan-specific phospholipase D (GPLD1), found in Homo sapiens (Human).